A 1099-amino-acid chain; its full sequence is Adenylate cyclase type 7 (1099 aa).

Residues 1–33 (MPAKGRYFLNEGDEGPDQAALYEKYRLTSLHGP) are Cytoplasmic-facing. 6 helical membrane passes run 34 to 54 (LLLLLLLVAAATCIALISIAF), 63 to 83 (QVVLGTAFLMLTLFVALYVLV), 95 to 117 (ALALLTWACLMVLGSVLMWDSLE), 122 to 142 (AWEQVPFFLFVVFVVYALLPL), 147 to 167 (AIVAGVTSTVSHLLVFGAVTR), and 178 to 198 (LGLQLLANAVILLGGNFTGAF). The Cytoplasmic portion of the chain corresponds to 199–595 (HKHQLQDASR…YRLVPIPRAR (397 aa)). Mg(2+)-binding residues include aspartate 286, isoleucine 287, and aspartate 330. ATP is bound by residues 286 to 291 (DIVGFT), 328 to 330 (LGD), and arginine 374. Residues 456–476 (DPRSQQPPPPSHHLSKPKGDA) form a disordered region. The mediates regulation of adenylate cyclase activity by C5 alpha-induced G- beta and gamma pathway stretch occupies residues 479-484 (KMRASV). Residues 493 to 501 (WGAARPFAH) form a mediates regulation of adenylate cyclase activity by sphingosine 1-phosphate-induced G alpha 13 pathway region. The segment at 504–543 (HRESVSSSETPISNGRRQKAIPLRRHRAPDRSASPKGRLE) is disordered. Residues 508-518 (VSSSETPISNG) are compositionally biased toward polar residues. Positions 508 to 585 (VSSSETPISN…IFLEKGFERE (78 aa)) are modulates adenylate cyclase activity by modulating the binding of G(s)alpha to the high-affinity G(s)alpha binding site in 7C1a/7C2. Over residues 519-531 (RRQKAIPLRRHRA) the composition is skewed to basic residues. Helical transmembrane passes span 596–616 (YDFACASLVFVCILLVHLLVM), 621–641 (TLGVSFGLVACLLGLVLSFCF), and 670–689 (LVLVVLTVGSLLTVAIINMP). Asparagine 702 carries an N-linked (GlcNAc...) asparagine glycan. 3 consecutive transmembrane segments (helical) span residues 719–738 (LLPYYTCSCILGFIACSVFL), 747–766 (MLLTVALVAYLLLFNLSPCW), and 813–833 (DLKIMVNFYLILFYATLILLS). Topologically, residues 834–1099 (RQIDYYCRLD…TAKFQGLGLN (266 aa)) are cytoplasmic. ATP-binding positions include lysine 950, 1029-1031 (DIW), 1036-1040 (NVASR), and lysine 1076.

The protein belongs to the adenylyl cyclase class-4/guanylyl cyclase family. Mg(2+) is required as a cofactor. Mn(2+) serves as cofactor. In terms of processing, phosphorylated by PRKCD. In terms of tissue distribution, most abundant in heart, spleen and lung.

Its subcellular location is the membrane. It catalyses the reaction ATP = 3',5'-cyclic AMP + diphosphate. With respect to regulation, activated by the G protein alpha subunit. Activated by the G protein beta and gamma subunit complex. Activated by GNA13 and GNA12. Ethanol and phorbol 12,13-dibutanoate significantly potentiate adenylate cyclase activity generated in response to the activation of the prostanoid receptor by the agonist prostaglandin E1(1-) in a PKC-dependent manner. Inhibited by lithium. Catalyzes the formation of cAMP in response to activation of G protein-coupled receptors. Functions in signaling cascades activated namely by thrombin and sphingosine 1-phosphate and mediates regulation of cAMP synthesis through synergistic action of the stimulatory G alpha protein with GNA13. Also, during inflammation, mediates zymosan-induced increase intracellular cAMP, leading to protein kinase A pathway activation in order to modulate innate immune responses through heterotrimeric G proteins G(12/13). Functions in signaling cascades activated namely by dopamine and C5 alpha chain and mediates regulation of cAMP synthesis through synergistic action of the stimulatory G protein with G beta:gamma complex. Functions, through cAMP response regulation, to keep inflammation under control during bacterial infection by sensing the presence of serum factors, such as the bioactive lysophospholipid (LPA) that regulate LPS-induced TNF-alpha production. However, it is also required for the optimal functions of B and T cells during adaptive immune responses by regulating cAMP synthesis in both B and T cells. The sequence is that of Adenylate cyclase type 7 from Mus musculus (Mouse).